Here is a 78-residue protein sequence, read N- to C-terminus: Acyl carrier protein (78 aa).

Residues 2 to 77 (SDIAERVKKI…DAVKFIEKAQ (76 aa)) enclose the Carrier domain. At Ser37 the chain carries O-(pantetheine 4'-phosphoryl)serine.

It belongs to the acyl carrier protein (ACP) family. In terms of processing, 4'-phosphopantetheine is transferred from CoA to a specific serine of apo-ACP by AcpS. This modification is essential for activity because fatty acids are bound in thioester linkage to the sulfhydryl of the prosthetic group.

The protein resides in the cytoplasm. It participates in lipid metabolism; fatty acid biosynthesis. Carrier of the growing fatty acid chain in fatty acid biosynthesis. This chain is Acyl carrier protein, found in Rhizobium etli (strain CIAT 652).